A 56-amino-acid polypeptide reads, in one-letter code: Bowman-Birk type proteinase inhibitor I-2B (56 aa).

4 cysteine pairs are disulfide-bonded: Cys10–Cys25, Cys15–Cys23, Cys32–Cys39, and Cys36–Cys51.

This sequence belongs to the Bowman-Birk serine protease inhibitor family.

In Triticum aestivum (Wheat), this protein is Bowman-Birk type proteinase inhibitor I-2B.